The chain runs to 365 residues: tRNA/tmRNA (uracil-C(5))-methyltransferase (365 aa).

5 residues coordinate S-adenosyl-L-methionine: Gln-189, Tyr-217, Asn-222, Glu-238, and Asp-298. Cys-323 (nucleophile) is an active-site residue. Glu-357 functions as the Proton acceptor in the catalytic mechanism.

This sequence belongs to the class I-like SAM-binding methyltransferase superfamily. RNA M5U methyltransferase family. TrmA subfamily.

The enzyme catalyses uridine(54) in tRNA + S-adenosyl-L-methionine = 5-methyluridine(54) in tRNA + S-adenosyl-L-homocysteine + H(+). It catalyses the reaction uridine(341) in tmRNA + S-adenosyl-L-methionine = 5-methyluridine(341) in tmRNA + S-adenosyl-L-homocysteine + H(+). Its function is as follows. Dual-specificity methyltransferase that catalyzes the formation of 5-methyluridine at position 54 (m5U54) in all tRNAs, and that of position 341 (m5U341) in tmRNA (transfer-mRNA). The polypeptide is tRNA/tmRNA (uracil-C(5))-methyltransferase (Proteus mirabilis (strain HI4320)).